An 858-amino-acid polypeptide reads, in one-letter code: Magnesium transporter ALR2 (858 aa).

The segment covering 1–14 (MSSLSTSFDSSSDL) has biased composition (low complexity). Disordered stretches follow at residues 1–81 (MSSL…NGGY), 318–337 (TYNH…TSGS), and 365–396 (NNES…EGND). Over 1–741 (MSSLSTSFDS…NNKVTEMLGK (741 aa)) the chain is Cytoplasmic. Residues 46–61 (PIRHEALALKVDETKD) show a composition bias toward basic and acidic residues. A compositionally biased stretch (low complexity) spans 67–81 (SSSNGENSGVENGGY). 2 stretches are compositionally biased toward basic and acidic residues: residues 367 to 379 (ESVR…DLHP) and 386 to 395 (NKIEGEKEGN). The helical transmembrane segment at 742 to 762 (VTMLGTMLVPLNVITGLFGMN) threads the bilayer. The Extracellular segment spans residues 763-771 (VKVPGRNGS). The chain crosses the membrane as a helical span at residues 772 to 792 (IAWWYGILGVLLLLAVISWFL). Residues 793 to 858 (ASYWIKKIDP…SLPSRYSRYN (66 aa)) are Cytoplasmic-facing.

Belongs to the CorA metal ion transporter (MIT) (TC 1.A.35) family.

Its subcellular location is the cell membrane. Functionally, plasma membrane magnesium transporter. The polypeptide is Magnesium transporter ALR2 (ALR2) (Saccharomyces cerevisiae (strain ATCC 204508 / S288c) (Baker's yeast)).